A 327-amino-acid polypeptide reads, in one-letter code: GMP reductase (327 aa).

The Thioimidate intermediate role is filled by Cys175. Residue 204–227 (IIADGGIRTHGDVAKSIRFGATMV) coordinates NADP(+).

This sequence belongs to the IMPDH/GMPR family. GuaC type 2 subfamily.

It catalyses the reaction IMP + NH4(+) + NADP(+) = GMP + NADPH + 2 H(+). In terms of biological role, catalyzes the irreversible NADPH-dependent deamination of GMP to IMP. It functions in the conversion of nucleobase, nucleoside and nucleotide derivatives of G to A nucleotides, and in maintaining the intracellular balance of A and G nucleotides. The chain is GMP reductase from Bacillus cereus (strain ATCC 10987 / NRS 248).